A 102-amino-acid polypeptide reads, in one-letter code: Large ribosomal subunit protein bL21 (102 aa).

This sequence belongs to the bacterial ribosomal protein bL21 family. Part of the 50S ribosomal subunit. Contacts protein L20.

This protein binds to 23S rRNA in the presence of protein L20. This Ligilactobacillus salivarius (strain UCC118) (Lactobacillus salivarius) protein is Large ribosomal subunit protein bL21.